A 361-amino-acid chain; its full sequence is Velvet complex subunit B (361 aa).

Residues 1 to 336 (MIVRTEDQKL…GNQGQKLPLR (336 aa)) form the Velvet domain. Disordered regions lie at residues 42 to 222 (PSST…NNIP) and 327 to 361 (GNQGQKLPLRNRHGTGSKRRRRNQSGSEGESEDDS). Composition is skewed to low complexity over residues 57–74 (PSASTTRRRTISSSSRPP) and 93–107 (PPSSNGSGYYPSQSQ). The span at 108–127 (DNLTPSSPYPPHSNSEQPQT) shows a compositional bias: polar residues. Residues 130-147 (YPPPPPIDRAAPFPPPVL) show a composition bias toward pro residues. Composition is skewed to polar residues over residues 149 to 168 (SIQSFNRTASGDWNPSNNDD), 181 to 196 (GYTNNAQPDQPTYGSG), and 212 to 222 (SGNATPQNNIP). The segment covering 335 to 349 (LRNRHGTGSKRRRRN) has biased composition (basic residues).

Belongs to the velvet family. VelB subfamily. In terms of assembly, component of the heterotrimeric velvet complex composed of laeA, veA and velB; VeA acting as a bridging protein between laeA and velB. Forms a heterodimeric complex with vosA; the formation of the velB-vosA complex is light-dependent.

The protein localises to the nucleus. Its subcellular location is the cytoplasm. In terms of biological role, component of the velvet transcription factor complex that controls sexual/asexual developmental ratio in response to light, promoting sexual development in the darkness while stimulating asexual sporulation under illumination. The velvet complex acts as a global regulator for secondary metabolite gene expression. Component of the velB-VosA heterodimeric complex that plays a dual role in activating genes associated with spore maturation and repressing certain development-associated genes. The velB-VosA complex binds DNA through the DNA-binding domain of vosA that recognizes an 11-nucleotide consensus sequence 5'-CTGGCCGCGGC-3' consisting of two motifs in the promoters of key developmental regulatory genes. The chain is Velvet complex subunit B from Coprinopsis cinerea (strain Okayama-7 / 130 / ATCC MYA-4618 / FGSC 9003) (Inky cap fungus).